A 552-amino-acid chain; its full sequence is Putative transport protein YPN_3727 (552 aa).

A run of 6 helical transmembrane segments spans residues 1-21, 26-46, 65-85, 96-116, 119-139, and 158-178; these read MSAIALTVSMLALVAVLGLWI, IYGVGLGIGGVLFGGIIVGHF, FGLILFVYTIGIQVGPGFFSS, FAILMVVVGGLVTAIIHKLFA, LPIILGVFSGAVTNTPALGAA, and MGYAMAYPFGICGILLVMWLI. 2 RCK C-terminal domains span residues 192 to 276 and 279 to 361; these read AFDS…VVGE and DVTL…IVGN. Transmembrane regions (helical) follow at residues 371-391, 393-413, 439-459, 464-484, 493-513, and 530-550; these read MLPVFIGVGLGVLLGSIPLFV, GFPAALRLGLAGGPLVVALIL, IVLFLSVVGLKSGGDFINTLV, LAWIGYGAMITGIPLLTVGIL, YLTLCGMLAGSMTDPPALAFA, and VYPLAMFLRIMSPQILAVLFW.

Belongs to the AAE transporter (TC 2.A.81) family. YidE subfamily.

It is found in the cell membrane. This chain is Putative transport protein YPN_3727, found in Yersinia pestis bv. Antiqua (strain Nepal516).